A 663-amino-acid chain; its full sequence is Preterminal protein (663 aa).

The Nuclear localization signal signature appears at 367–376 (SLPLPTRRRR). The segment at 374–414 (RRRVARPAPPSPSPSPEPVELEMPPLEGEEEEEEEELPPRS) is disordered. Positions 380–390 (PAPPSPSPSPE) are enriched in pro residues. The span at 400 to 409 (EGEEEEEEEE) shows a compositional bias: acidic residues. An O-(5'-phospho-DNA)-serine modification is found at serine 575. The interval 632-663 (QLQPMPELNDPVQLPPLRPERQRPPLGPRRPL) is disordered.

The protein belongs to the adenoviridae terminal protein family. Heterodimer with the polymerase; this heterodimer binds to bp 9 to 18 of the genome. Interacts with host POU2F1; POU2F1 binds to the auxiliary sequences in the inverted terminal repeats and tethers the pTP-POL heterodimer to the origin DNA thereby participating in the assembly of the pre-initiation complex (POL-TP-DBP-NFIA-POU2F1). In terms of processing, preterminal protein is used to replicate viral genome, upon genomic encapsidation it is processed first into iTP and finally into TP by adenovirus protease.

The protein resides in the host nucleus matrix. Its function is as follows. Protein covalently bound to the viral DNA that acts as a primer for viral genomic replication by DNA strand displacement. Assembles on the viral origin of replication in an initiation complex with viral polymerase, DBP, host NFIA and host POU2F1/OCT1. During initiation, the polymerase covalently couples the first dCTP with Ser-580 of pTP. The terminal protein stimulates the template activity over 20 fold compared to protein-free templates. Neo-synthesized viral genomes are linked to two preterminal proteins, one for each 5' end. These new genomes are encapsidated in the nucleus, and during capsid maturation by viral protease, preterminal protein is first cleaved into intermediary (iTP), then into mature TP. May play a role in host nuclear matrix localization of genomic DNA. The chain is Preterminal protein from Bos taurus (Bovine).